A 926-amino-acid polypeptide reads, in one-letter code: Protein Niban 1 (926 aa).

A lipid anchor (N-myristoyl glycine) is attached at Gly2. Phosphoserine occurs at positions 578, 581, 595, 601, and 640. Disordered regions lie at residues 604–699 (LPGA…VPGS) and 719–889 (VEND…EQVN). Residues 661 to 672 (VENTAGPLSSHL) are compositionally biased toward polar residues. Ser699 bears the Phosphoserine mark. Basic and acidic residues predominate over residues 733-745 (NIKEEESKIHPEA). Phosphoserine is present on Ser755. The span at 756-767 (CEEREVREKEAQ) shows a compositional bias: basic and acidic residues. A compositionally biased stretch (low complexity) spans 784-797 (GRGSTSQSTSGGLT). Residues 840 to 854 (VTVTPQEDATLSSNP) are compositionally biased toward polar residues. Ser923 is subject to Phosphoserine.

Belongs to the Niban family.

Its subcellular location is the cytoplasm. The protein resides in the membrane. Functionally, regulates phosphorylation of a number of proteins involved in translation regulation including EIF2A, EIF4EBP1 and RPS6KB1. May be involved in the endoplasmic reticulum stress response. The chain is Protein Niban 1 from Mus musculus (Mouse).